Consider the following 562-residue polypeptide: MTGAKTNQVDQRPLSITDLLHFIPYDLQQTFLFEAILSYGKIYNLYPIKWVFLIALALFEIGSLICGAAPSSVGLIMGRVVAGIGSGGLFAGAILLVAEFKPLNERAFYNGMLGAMYSVASVAGPLMGGAFTERVTWRLCFYINLPLGVVTAVIVFLLVPNNYDSGRDSRRGLPLKKKLQEMDLYGLVVLVPTIICILLATQWGGTKYSWGNARIIALFVVGFVLFVAFVVIEIWQGDRAIVPPSLVKRRTVWACSIFSFCLFGSFLVVAYFLPLWFQAIKGDTATESGIHNLPSILGTTIFSVAAGGMVFGLGYYTWACILGSVLAAVGAGLLSTLEVDSNAAKWIGYQVLYGAGCGFGLNQPLIAIQAALPDFQKSEGTAVVIFMQTFGGTIAIAVAQNVFNNKLVSNILAAGIPVDPAALLSVGATKLQGLVQPQFFGRLQLAYNDSITQTFYVAVATAGLSMAGSILIPWLSVKQAVAPEDAETANTVMPFQHPSSDVDLAMPAILRQSGEIASEDSQSSDIEKVPRNNEVSTYDSQTSEVEKSSVGSTNRKVESIRN.

11 helical membrane passes run 50-70 (WVFL…GAAP), 80-100 (VVAG…VAEF), 111-131 (GMLG…GGAF), 139-159 (LCFY…FLLV), 184-204 (LYGL…TQWG), 215-235 (IIAL…IEIW), 257-277 (IFSF…PLWF), 288-308 (SGIH…AAGG), 309-329 (MVFG…LAAV), 351-371 (VLYG…IQAA), and 383-403 (VVIF…QNVF). Residue N448 is glycosylated (N-linked (GlcNAc...) asparagine). The helical transmembrane segment at 455–475 (FYVAVATAGLSMAGSILIPWL) threads the bilayer. A disordered region spans residues 515–562 (EIASEDSQSSDIEKVPRNNEVSTYDSQTSEVEKSSVGSTNRKVESIRN). The span at 533–554 (NEVSTYDSQTSEVEKSSVGSTN) shows a compositional bias: polar residues.

The protein belongs to the major facilitator superfamily. TCR/Tet family.

It localises to the cell membrane. MFS-type efflux pump; part of the gene cluster that mediates the biosynthesis of elsinochrome C, a perelyenequinone phytotoxin structurally similar to cercosporin. This chain is MFS-type efflux pump elcC, found in Phaeosphaeria nodorum (strain SN15 / ATCC MYA-4574 / FGSC 10173) (Glume blotch fungus).